A 765-amino-acid chain; its full sequence is Periplasmic beta-glucosidase (765 aa).

A signal peptide spans 1–20 (MKWLCSVGIAVSLALQPALA). Residue Asp-287 is part of the active site.

The protein belongs to the glycosyl hydrolase 3 family.

It localises to the periplasm. It carries out the reaction Hydrolysis of terminal, non-reducing beta-D-glucosyl residues with release of beta-D-glucose.. In Escherichia coli (strain K12), this protein is Periplasmic beta-glucosidase (bglX).